A 259-amino-acid polypeptide reads, in one-letter code: Probable metal transport system ATP-binding protein CPn_0348/CP_0412/CPj0348/CpB0355 (259 aa).

Residues 3–241 enclose the ABC transporter domain; the sequence is VKDETFWSVH…TIFQTYGCEI (239 aa). 41 to 48 contributes to the ATP binding site; that stretch reads GPNGAGKS.

Belongs to the ABC transporter superfamily.

The protein localises to the cell inner membrane. In terms of biological role, part of an ATP-driven transport system CPn0346/CPn0347/CPn0348/CPn0349 for a metal. Probably responsible for energy coupling to the transport system. In Chlamydia pneumoniae (Chlamydophila pneumoniae), this protein is Probable metal transport system ATP-binding protein CPn_0348/CP_0412/CPj0348/CpB0355.